The sequence spans 216 residues: Guanylate kinase (216 aa).

In terms of domain architecture, Guanylate kinase-like spans Gly-11–Leu-189. Residue Gly-18–Gly-25 coordinates ATP.

The protein belongs to the guanylate kinase family.

It is found in the cytoplasm. The enzyme catalyses GMP + ATP = GDP + ADP. Essential for recycling GMP and indirectly, cGMP. The protein is Guanylate kinase of Clostridium perfringens (strain ATCC 13124 / DSM 756 / JCM 1290 / NCIMB 6125 / NCTC 8237 / Type A).